Consider the following 80-residue polypeptide: Large ribosomal subunit protein eL14 (80 aa).

Belongs to the eukaryotic ribosomal protein eL14 family.

The sequence is that of Large ribosomal subunit protein eL14 from Methanocaldococcus jannaschii (strain ATCC 43067 / DSM 2661 / JAL-1 / JCM 10045 / NBRC 100440) (Methanococcus jannaschii).